The following is an 83-amino-acid chain: Bowman-Birk type proteinase inhibitor (83 aa).

7 disulfide bridges follow: C18-C72, C19-C34, C22-C68, C24-C32, C42-C49, C46-C61, and C51-C59.

The protein belongs to the Bowman-Birk serine protease inhibitor family.

The chain is Bowman-Birk type proteinase inhibitor from Phaseolus lunatus (Lima bean).